Here is a 410-residue protein sequence, read N- to C-terminus: Arginine deiminase (410 aa).

Cys-400 acts as the Amidino-cysteine intermediate in catalysis.

Belongs to the arginine deiminase family.

The protein resides in the cytoplasm. It catalyses the reaction L-arginine + H2O = L-citrulline + NH4(+). Its pathway is amino-acid degradation; L-arginine degradation via ADI pathway; carbamoyl phosphate from L-arginine: step 1/2. This Streptococcus uberis (strain ATCC BAA-854 / 0140J) protein is Arginine deiminase.